The following is a 106-amino-acid chain: N(4)-acetylcytidine amidohydrolase (106 aa).

Residues 9–105 (TFFEFLTPLI…ELYVIEYELI (97 aa)) form the ASCH domain. Catalysis depends on Lys-23, which acts as the Proton acceptor. The active-site Nucleophile is the Thr-26. Glu-76 functions as the Proton donor in the catalytic mechanism.

The protein belongs to the N(4)-acetylcytidine amidohydrolase family.

The catalysed reaction is N(4)-acetylcytidine + H2O = cytidine + acetate + H(+). The enzyme catalyses N(4)-acetyl-2'-deoxycytidine + H2O = 2'-deoxycytidine + acetate + H(+). It carries out the reaction N(4)-acetylcytosine + H2O = cytosine + acetate + H(+). Its function is as follows. Catalyzes the hydrolysis of N(4)-acetylcytidine (ac4C). The polypeptide is N(4)-acetylcytidine amidohydrolase (Vibrio campbellii (strain ATCC BAA-1116)).